A 390-amino-acid polypeptide reads, in one-letter code: MLKFEILATDTSSHARRGTLTLNHGVVQTPIFMPVGTYGTVKGVMPRSLREMGAQIILGNTFHLWMRPGLDVMQSFGGLHGFEQWDKPILTDSGGFQVWSLGSMRKITEEGVHFASPVNGDKLFMSPEVSMQIQTTLNSDIVMQLDECTPYETNGHKTTEAEARKSMEMSRRWAVRSKNEFERLGNPNALFGIVQGGMYKNLRQESLEALVEMDFPGYAVGGVSVGEPKDEMLDIMAHTPHRLPAHKPRYLMGVGTPEDLVEGVAQGVDMFDCVMPTRNARNGTLFTRYGDLKIRNARHKTDHQPLDPSCTCHACAGTEGVSWNDGGRGGFSRAYLHHLDRCGEMLGPMLTTIHNLHYYLNLMREVREALDAGQFGAFRARFKAERARGV.

The Proton acceptor role is filled by Asp92. Residues 92–96, Asp146, Gln195, and Gly222 contribute to the substrate site; that span reads DSGGF. An RNA binding region spans residues 253 to 259; it reads GVGTPED. The Nucleophile role is filled by Asp272. The segment at 277-281 is RNA binding; important for wobble base 34 recognition; it reads TRNAR. Cys310, Cys312, Cys315, and His354 together coordinate Zn(2+).

It belongs to the queuine tRNA-ribosyltransferase family. As to quaternary structure, homodimer. Within each dimer, one monomer is responsible for RNA recognition and catalysis, while the other monomer binds to the replacement base PreQ1. Zn(2+) serves as cofactor.

The enzyme catalyses 7-aminomethyl-7-carbaguanine + guanosine(34) in tRNA = 7-aminomethyl-7-carbaguanosine(34) in tRNA + guanine. It participates in tRNA modification; tRNA-queuosine biosynthesis. Its function is as follows. Catalyzes the base-exchange of a guanine (G) residue with the queuine precursor 7-aminomethyl-7-deazaguanine (PreQ1) at position 34 (anticodon wobble position) in tRNAs with GU(N) anticodons (tRNA-Asp, -Asn, -His and -Tyr). Catalysis occurs through a double-displacement mechanism. The nucleophile active site attacks the C1' of nucleotide 34 to detach the guanine base from the RNA, forming a covalent enzyme-RNA intermediate. The proton acceptor active site deprotonates the incoming PreQ1, allowing a nucleophilic attack on the C1' of the ribose to form the product. After dissociation, two additional enzymatic reactions on the tRNA convert PreQ1 to queuine (Q), resulting in the hypermodified nucleoside queuosine (7-(((4,5-cis-dihydroxy-2-cyclopenten-1-yl)amino)methyl)-7-deazaguanosine). The sequence is that of Queuine tRNA-ribosyltransferase from Acidovorax ebreus (strain TPSY) (Diaphorobacter sp. (strain TPSY)).